The following is a 118-amino-acid chain: UPF0382 membrane protein C1782.12c (118 aa).

A signal peptide spans 1 to 18; that stretch reads MTIWNVAALTGLLSVGLG. The Lumenal segment spans residues 19–40; the sequence is AYGSHGLQKRVQDPHLLKSWST. Residues 41–61 form a helical membrane-spanning segment; sequence ACTYLMFHSLATMAVSLHPVY. Topologically, residues 62–67 are cytoplasmic; sequence GKSRWT. A helical transmembrane segment spans residues 68 to 88; that stretch reads GPLLITGSCLFSGTIYGLCLL. The Lumenal segment spans residues 89 to 96; it reads PKGHSLRR. Residues 97-117 form a helical membrane-spanning segment; that stretch reads ILGPLTPIGGLVMLTGWATML. A topological domain (cytoplasmic) is located at residue Val118.

It belongs to the UPF0382 family.

Its subcellular location is the endoplasmic reticulum membrane. The sequence is that of UPF0382 membrane protein C1782.12c from Schizosaccharomyces pombe (strain 972 / ATCC 24843) (Fission yeast).